The following is a 440-amino-acid chain: Serine protease inhibitor A3G (440 aa).

The segment at 357 to 382 (GTEAAAATGMAGVGCCAVFDFLEIFF) is RCL.

The protein belongs to the serpin family. In terms of tissue distribution, expressed in bone marrow (particularly hematopoietic stem cells), heart, kidney, liver, lung, skeletal muscle, spleen, testis, thymus and T-cells.

It localises to the cytoplasm. Its subcellular location is the nucleus. In terms of biological role, serine and cysteine protease inhibitor. Can inhibit lysosomal papain-like proteases including the cathepsins B, G, H, K, L and V. Ineffective against elastase, granzyme A, granzyme B, or caspases 3, 8 or 9. Inhibition of cytoplasmic cathepsin B following release from the lysosome may protect cells from apoptosis. This may facilitate the survival of progenitor T-cells and the subsequent development of long term memory CD8 T-cells. In Mus musculus (Mouse), this protein is Serine protease inhibitor A3G (Serpina3g).